Consider the following 522-residue polypeptide: 3'3'-cGAMP-specific phosphodiesterase 2 (522 aa).

Residues 36–160 form the Response regulatory domain; that stretch reads CVLLVDDDEQ…QKLRTLLYSM (125 aa). D91 bears the 4-aspartylphosphate mark. Residues 325–522 enclose the HD-GYP domain; that stretch reads LRETSKELVY…FIAIRASLPD (198 aa). 2 residues coordinate a divalent metal cation: H382 and D383. Catalysis depends on K386, which acts as the Proton donor. H411, H437, H438, and D466 together coordinate a divalent metal cation.

Homodimer. Mn(2+) serves as cofactor.

It catalyses the reaction 3',3'-cGAMP + H2O = 5'-pApG-3' + H(+). Functionally, phosphodiesterase (PDE) that catalyzes the hydrolysis of 3'3'-cyclic GMP-AMP (3'3'-cGAMP), leading to linear 5'-pApG. Counteracts the function of the 3'3'-cGAMP synthase DncV, and is involved in the modulation of intracellular 3'3'-cGAMP levels. Enhances bacterial chemotaxis and inhibits intestinal colonization in vivo. Thus exerts a crucial role in regulating bacterial infectivity through catalyzing 3'3'-cGAMP degradation. Is specific for 3'3'-cGAMP since it cannot degrade other cGAMP linkage isomers (3'2'-, 2'3'-, and 2'2'-cGAMPs). Is also able to hydrolyze c-di-GMP but not c-di-AMP. This chain is 3'3'-cGAMP-specific phosphodiesterase 2, found in Vibrio cholerae serotype O1 (strain ATCC 39315 / El Tor Inaba N16961).